The sequence spans 333 residues: Protein-methionine-sulfoxide reductase catalytic subunit MsrP (333 aa).

Positions 1-43 (MSKQRKLTEADVTPESVFYQRRKVLQALGITAASLALPHNAQA) form a signal peptide, tat-type signal. Residues Asn87, 90 to 91 (YE), Cys145, Thr180, Asn232, Arg237, and 248 to 250 (GIK) each bind Mo-molybdopterin.

Belongs to the MsrP family. As to quaternary structure, heterodimer of a catalytic subunit (MsrP) and a heme-binding subunit (MsrQ). Mo-molybdopterin serves as cofactor. Predicted to be exported by the Tat system. The position of the signal peptide cleavage has not been experimentally proven.

It is found in the periplasm. It catalyses the reaction L-methionyl-[protein] + a quinone + H2O = L-methionyl-(S)-S-oxide-[protein] + a quinol. The catalysed reaction is L-methionyl-[protein] + a quinone + H2O = L-methionyl-(R)-S-oxide-[protein] + a quinol. Its function is as follows. Part of the MsrPQ system that repairs oxidized periplasmic proteins containing methionine sulfoxide residues (Met-O), using respiratory chain electrons. Thus protects these proteins from oxidative-stress damage caused by reactive species of oxygen and chlorine generated by the host defense mechanisms. MsrPQ is essential for the maintenance of envelope integrity under bleach stress, rescuing a wide series of structurally unrelated periplasmic proteins from methionine oxidation. The catalytic subunit MsrP is non-stereospecific, being able to reduce both (R-) and (S-) diastereoisomers of methionine sulfoxide. The polypeptide is Protein-methionine-sulfoxide reductase catalytic subunit MsrP (Serratia proteamaculans (strain 568)).